A 376-amino-acid chain; its full sequence is DNA replication and repair protein RecF (376 aa).

ATP is bound at residue 35–42; that stretch reads GDNGSGKT.

This sequence belongs to the RecF family.

Its subcellular location is the cytoplasm. The RecF protein is involved in DNA metabolism; it is required for DNA replication and normal SOS inducibility. RecF binds preferentially to single-stranded, linear DNA. It also seems to bind ATP. This Agrobacterium fabrum (strain C58 / ATCC 33970) (Agrobacterium tumefaciens (strain C58)) protein is DNA replication and repair protein RecF.